A 119-amino-acid polypeptide reads, in one-letter code: Ribonuclease P protein component (119 aa).

This sequence belongs to the RnpA family. As to quaternary structure, consists of a catalytic RNA component (M1 or rnpB) and a protein subunit.

The catalysed reaction is Endonucleolytic cleavage of RNA, removing 5'-extranucleotides from tRNA precursor.. RNaseP catalyzes the removal of the 5'-leader sequence from pre-tRNA to produce the mature 5'-terminus. It can also cleave other RNA substrates such as 4.5S RNA. The protein component plays an auxiliary but essential role in vivo by binding to the 5'-leader sequence and broadening the substrate specificity of the ribozyme. This is Ribonuclease P protein component from Syntrophus aciditrophicus (strain SB).